The primary structure comprises 979 residues: UPF0182 protein MT0070 (979 aa).

A run of 7 helical transmembrane segments spans residues 19–41 (LVTAGMGMLALLLFGPRLVDIYV), 63–85 (LAIVAAVALVVAGIVLAALLLAY), 114–136 (LFGWGIAVTLGVVCGLIASFDWV), 174–196 (WLFVAVVLAFLASLLTHYLFGGL), 208–230 (AARVQLAVFAGAVVLLKAVAYWL), 261–280 (LVLVAIAVLCAVSFFTAIFL), and 285–307 (IPAMAAALLVLSAILVGGLWPLL). A disordered region spans residues 894-948 (VFGPGTGRVATXPGGDAASAPPPGAGGPAPPQGVPPPRTTQPPAAPPRGPDVPPA). Pro residues predominate over residues 913–946 (APPPGAGGPAPPQGVPPPRTTQPPAAPPRGPDVP).

Belongs to the UPF0182 family.

Its subcellular location is the cell membrane. The sequence is that of UPF0182 protein MT0070 from Mycobacterium tuberculosis (strain CDC 1551 / Oshkosh).